A 143-amino-acid polypeptide reads, in one-letter code: FAM161 homolog famh-136 (143 aa).

It belongs to the FAM136 family.

The protein resides in the cytoplasm. In terms of biological role, may play a role in locomotion and behavior. The chain is FAM161 homolog famh-136 from Caenorhabditis elegans.